Here is a 505-residue protein sequence, read N- to C-terminus: Maturase K (505 aa).

Belongs to the intron maturase 2 family. MatK subfamily.

The protein localises to the plastid. The protein resides in the chloroplast. Its function is as follows. Usually encoded in the trnK tRNA gene intron. Probably assists in splicing its own and other chloroplast group II introns. The chain is Maturase K from Silene otites (Spanish catchfly).